A 918-amino-acid chain; its full sequence is Probable lipoxygenase 6 (918 aa).

Residues 56–76 (AASPSSGIKGGGAGERRPAPE) are disordered. Residues 90–218 (QKEDIKEAVA…ELPTKRVFFS (129 aa)) form the PLAT domain. The region spanning 221-918 (PYLPSETPPG…CRGVPNSISI (698 aa)) is the Lipoxygenase domain. Positions 573, 578, 765, 769, and 918 each coordinate Fe cation.

This sequence belongs to the lipoxygenase family. Fe cation is required as a cofactor.

It catalyses the reaction (9Z,12Z)-octadecadienoate + O2 = (13S)-hydroperoxy-(9Z,11E)-octadecadienoate. It carries out the reaction (9Z,12Z,15Z)-octadecatrienoate + O2 = (13S)-hydroperoxy-(9Z,11E,15Z)-octadecatrienoate. It functions in the pathway lipid metabolism; oxylipin biosynthesis. Plant lipoxygenase may be involved in a number of diverse aspects of plant physiology including growth and development, pest resistance, and senescence or responses to wounding. Catalyzes the hydroperoxidation of lipids containing a cis,cis-1,4-pentadiene structure. The sequence is that of Probable lipoxygenase 6 from Oryza sativa subsp. japonica (Rice).